Here is a 236-residue protein sequence, read N- to C-terminus: Leucyl/phenylalanyl-tRNA--protein transferase (236 aa).

This sequence belongs to the L/F-transferase family.

The protein localises to the cytoplasm. It catalyses the reaction N-terminal L-lysyl-[protein] + L-leucyl-tRNA(Leu) = N-terminal L-leucyl-L-lysyl-[protein] + tRNA(Leu) + H(+). The catalysed reaction is N-terminal L-arginyl-[protein] + L-leucyl-tRNA(Leu) = N-terminal L-leucyl-L-arginyl-[protein] + tRNA(Leu) + H(+). It carries out the reaction L-phenylalanyl-tRNA(Phe) + an N-terminal L-alpha-aminoacyl-[protein] = an N-terminal L-phenylalanyl-L-alpha-aminoacyl-[protein] + tRNA(Phe). In terms of biological role, functions in the N-end rule pathway of protein degradation where it conjugates Leu, Phe and, less efficiently, Met from aminoacyl-tRNAs to the N-termini of proteins containing an N-terminal arginine or lysine. The sequence is that of Leucyl/phenylalanyl-tRNA--protein transferase from Shewanella sediminis (strain HAW-EB3).